The primary structure comprises 730 residues: Catalase-peroxidase (730 aa).

Positions 95-218 (WHSAGTYRVG…LAAVQMGLIY (124 aa)) form a cross-link, tryptophyl-tyrosyl-methioninium (Trp-Tyr) (with M-244). H96 (proton acceptor) is an active-site residue. The tryptophyl-tyrosyl-methioninium (Tyr-Met) (with W-95) cross-link spans 218 to 244 (YVNPEGPNGNPDPLGSAHDVRETFARM). H259 is a binding site for heme b.

The protein belongs to the peroxidase family. Peroxidase/catalase subfamily. In terms of assembly, homodimer or homotetramer. Requires heme b as cofactor. Post-translationally, formation of the three residue Trp-Tyr-Met cross-link is important for the catalase, but not the peroxidase activity of the enzyme.

It catalyses the reaction H2O2 + AH2 = A + 2 H2O. The catalysed reaction is 2 H2O2 = O2 + 2 H2O. In terms of biological role, bifunctional enzyme with both catalase and broad-spectrum peroxidase activity. The sequence is that of Catalase-peroxidase from Clostridium botulinum (strain Eklund 17B / Type B).